Reading from the N-terminus, the 462-residue chain is Fumarate hydratase class II (462 aa).

Residues 97-99 (SGT), 127-130 (HPND), 137-139 (SSN), and Thr-185 contribute to the substrate site. His-186 acts as the Proton donor/acceptor in catalysis. Ser-316 is an active-site residue. Substrate is bound by residues Ser-317 and 322–324 (KVN).

The protein belongs to the class-II fumarase/aspartase family. Fumarase subfamily. In terms of assembly, homotetramer.

The protein resides in the cytoplasm. It catalyses the reaction (S)-malate = fumarate + H2O. The protein operates within carbohydrate metabolism; tricarboxylic acid cycle; (S)-malate from fumarate: step 1/1. Involved in the TCA cycle. Catalyzes the stereospecific interconversion of fumarate to L-malate. This chain is Fumarate hydratase class II, found in Bacillus cereus (strain ATCC 14579 / DSM 31 / CCUG 7414 / JCM 2152 / NBRC 15305 / NCIMB 9373 / NCTC 2599 / NRRL B-3711).